The following is a 359-amino-acid chain: DNA integrity scanning protein DisA (359 aa).

A DAC domain is found at 10–148 (ELDLLDIVQF…GNRRYTLKDI (139 aa)). ATP-binding positions include Gly-77, Leu-95, and 108 to 112 (MRHRT).

The protein belongs to the DisA family. Homooctamer. Mg(2+) is required as a cofactor.

It catalyses the reaction 2 ATP = 3',3'-c-di-AMP + 2 diphosphate. Its function is as follows. Participates in a DNA-damage check-point that is active prior to asymmetric division when DNA is damaged. DisA forms globular foci that rapidly scan along the chromosomes during sporulation, searching for lesions. When a lesion is present, DisA pauses at the lesion site. This triggers a cellular response that culminates in a temporary block in sporulation initiation. Functionally, also has diadenylate cyclase activity, catalyzing the condensation of 2 ATP molecules into cyclic di-AMP (c-di-AMP). c-di-AMP acts as a signaling molecule that couples DNA integrity with progression of sporulation. The rise in c-di-AMP level generated by DisA while scanning the chromosome, operates as a positive signal that advances sporulation; upon encountering a lesion, the DisA focus arrests at the damaged site and halts c-di-AMP synthesis. The protein is DNA integrity scanning protein DisA of Bacillus pumilus (strain SAFR-032).